A 299-amino-acid polypeptide reads, in one-letter code: Glycine--tRNA ligase alpha subunit (299 aa).

This sequence belongs to the class-II aminoacyl-tRNA synthetase family. As to quaternary structure, tetramer of two alpha and two beta subunits.

The protein localises to the cytoplasm. It catalyses the reaction tRNA(Gly) + glycine + ATP = glycyl-tRNA(Gly) + AMP + diphosphate. The sequence is that of Glycine--tRNA ligase alpha subunit from Laribacter hongkongensis (strain HLHK9).